The following is a 444-amino-acid chain: Protein EMP46 (444 aa).

The N-terminal stretch at 1–46 (MTTRKTASSLQLLGKITGTKAGTKQKKMNFINGLIWLYMCVWMVHG) is a signal peptide. Over 47 to 408 (KVTQKDELKW…YGKQTKGHDE (362 aa)) the chain is Lumenal. Residues 52 to 269 (DELKWNKGYS…EILKMKLYDG (218 aa)) form the L-type lectin-like domain. Residue Tyr-177 coordinates K(+). Residues Cys-196 and Cys-230 are joined by a disulfide bond. Residues 409 to 429 (IFSKISVWLALLIFIMITLAY) form a helical membrane-spanning segment. The interval 429-432 (YYMF) is mediates the interactions with COPI and COPII coat complexes. Over 430 to 444 (YMFRINQDIKKVKLL) the chain is Cytoplasmic. The Di-lysine motif signature appears at 440-444 (KVKLL).

This sequence belongs to the EMP46/EMP47 family. Interacts with EMP47 in the endoplasmic reticulum membrane in order to be transported to the Golgi apparatus. Interacts with the coatomer proteins COP1, SEC21 and SEC23.

Its subcellular location is the golgi apparatus membrane. It localises to the endoplasmic reticulum membrane. Functionally, involved in the secretion of glycoproteins and in nucleus architecture and gene silencing. The sequence is that of Protein EMP46 (EMP46) from Saccharomyces cerevisiae (strain ATCC 204508 / S288c) (Baker's yeast).